The sequence spans 144 residues: Large ribosomal subunit protein uL16c (144 aa).

Belongs to the universal ribosomal protein uL16 family. As to quaternary structure, part of the 50S ribosomal subunit.

Its subcellular location is the plastid. The protein resides in the chloroplast. This is Large ribosomal subunit protein uL16c from Chara vulgaris (Common stonewort).